Reading from the N-terminus, the 545-residue chain is Chaperonin GroEL (545 aa).

ATP is bound by residues T30 to P33, K51, D87 to T91, G415, and D495.

The protein belongs to the chaperonin (HSP60) family. As to quaternary structure, forms a cylinder of 14 subunits composed of two heptameric rings stacked back-to-back. Interacts with the co-chaperonin GroES.

The protein resides in the cytoplasm. It carries out the reaction ATP + H2O + a folded polypeptide = ADP + phosphate + an unfolded polypeptide.. Its function is as follows. Together with its co-chaperonin GroES, plays an essential role in assisting protein folding. The GroEL-GroES system forms a nano-cage that allows encapsulation of the non-native substrate proteins and provides a physical environment optimized to promote and accelerate protein folding. The polypeptide is Chaperonin GroEL (Shewanella baltica (strain OS185)).